The chain runs to 641 residues: Peroxisomal targeting signal 1 receptor (641 aa).

Residue Cys-12 forms a Glycyl cysteine thioester (Cys-Gly) (interchain with G-Cter in ubiquitin) linkage. Residues 12-34 (CSEPNALGNFVQHFTNERSYHDK) form an amphipathic helix 1 (AH1) region. The interval 74 to 92 (HLMMDRHLNLRDGPREHKE) is amphipathic helix 2 (AH2). The interval 261–288 (VEAAWDETARRTISDITRPITQINDPKL) is amphipathic helix 4 (AH4). Positions 331 to 335 (WTEDY) match the WxxxF/Y motif motif. TPR repeat units follow at residues 359–392 (DSDT…NPEN), 393–426 (AMAW…DPTN), 427–460 (SKAR…TPEY), 503–536 (PEVQ…SPTD), 538–570 (QLWN…KPSY), and 571–604 (VRAR…HPAP).

It belongs to the peroxisomal targeting signal receptor family. In terms of assembly, interacts (via WxxxF/Y and LVxEF motifs) with PEX14; promoting translocation through the PEX13-PEX14 docking complex. Interacts with PEX7, promoting peroxisomal import of proteins containing a C-terminal PTS2-type peroxisomal targeting signal. Monoubiquitinated at Cys-12 by PEX2 during PEX5 passage through the retrotranslocation channel. Cys-12 monoubiquitination acts as a recognition signal for the PEX1-PEX6 complex and is required for PEX5 extraction and export from peroxisomes. When PEX5 recycling is compromised, polyubiquitinated by PEX10 during its passage through the retrotranslocation channel, leading to its degradation.

It localises to the cytoplasm. The protein localises to the cytosol. Its subcellular location is the peroxisome matrix. Functionally, receptor that mediates peroxisomal import of proteins containing a C-terminal PTS1-type tripeptide peroxisomal targeting signal (SKL-type). Binds to cargo proteins containing a PTS1 peroxisomal targeting signal in the cytosol, and translocates them into the peroxisome matrix by passing through the PEX13-PEX14 docking complex along with cargo proteins. PEX5 receptor is then retrotranslocated into the cytosol, leading to release of bound cargo in the peroxisome matrix, and reset for a subsequent peroxisome import cycle. Its function is as follows. In addition to promoting peroxisomal translocation of proteins containing a PTS1 peroxisomal targeting signal, mediates peroxisomal import of proteins containing a C-terminal PTS2-type peroxisomal targeting signal via its interaction with PEX7. Interaction with PEX7 only takes place when PEX7 is associated with cargo proteins containing a PTS2 peroxisomal targeting signal. PEX7 along with PTS2-containing cargo proteins are then translocated through the PEX13-PEX14 docking complex together with PEX5. The chain is Peroxisomal targeting signal 1 receptor (pex5) from Dictyostelium discoideum (Social amoeba).